The following is a 173-amino-acid chain: MAQAVDASKNLPSDPRNREVVFPAFRDPQLGNLETPVNASPLSKWFINNLPAYRPGLSPARRGLEVGMAHGYWIFGPFAKLGPLRDTDNANLAGLLAAIGLVVLLTGALSLYSNSNPPKALPSVTVPNPPVDAFNSKESWNNFASSFLIGGIGGAVVAYFLTSNLGIIQGLFG.

2 consecutive transmembrane segments (helical) span residues L92–Y112 and L148–I168.

The protein belongs to the PsaL family.

The protein localises to the cellular thylakoid membrane. The polypeptide is Photosystem I reaction center subunit XI (Nostoc punctiforme (strain ATCC 29133 / PCC 73102)).